Here is a 229-residue protein sequence, read N- to C-terminus: 2,3-bisphosphoglycerate-dependent phosphoglycerate mutase (229 aa).

Residues 7–14, 20–21, Arg-59, 86–89, Lys-97, 113–114, and 182–183 each bind substrate; these read RHGQSEWN, TG, ERHY, RR, and GN. The active-site Tele-phosphohistidine intermediate is the His-8. Catalysis depends on Glu-86, which acts as the Proton donor/acceptor.

The protein belongs to the phosphoglycerate mutase family. BPG-dependent PGAM subfamily.

The catalysed reaction is (2R)-2-phosphoglycerate = (2R)-3-phosphoglycerate. The protein operates within carbohydrate degradation; glycolysis; pyruvate from D-glyceraldehyde 3-phosphate: step 3/5. Catalyzes the interconversion of 2-phosphoglycerate and 3-phosphoglycerate. The polypeptide is 2,3-bisphosphoglycerate-dependent phosphoglycerate mutase (Listeria monocytogenes serovar 1/2a (strain ATCC BAA-679 / EGD-e)).